The sequence spans 293 residues: Elongation factor Ts (293 aa).

Positions T80–V83 are involved in Mg(2+) ion dislocation from EF-Tu.

The protein belongs to the EF-Ts family.

It is found in the cytoplasm. In terms of biological role, associates with the EF-Tu.GDP complex and induces the exchange of GDP to GTP. It remains bound to the aminoacyl-tRNA.EF-Tu.GTP complex up to the GTP hydrolysis stage on the ribosome. The chain is Elongation factor Ts from Burkholderia lata (strain ATCC 17760 / DSM 23089 / LMG 22485 / NCIMB 9086 / R18194 / 383).